A 182-amino-acid polypeptide reads, in one-letter code: Isopentenyl-diphosphate Delta-isomerase (182 aa).

Residues His-25 and His-32 each coordinate Mn(2+). The Nudix hydrolase domain occupies 30-164 (LLHLAFSSWL…PWAFSPWMVM (135 aa)). The active site involves Cys-67. Residue Cys-67 coordinates Mg(2+). His-69 contacts Mn(2+). Mg(2+) is bound at residue Glu-87. Residues Glu-114 and Glu-116 each coordinate Mn(2+). The active site involves Glu-116.

This sequence belongs to the IPP isomerase type 1 family. As to quaternary structure, homodimer. The cofactor is Mg(2+). Mn(2+) serves as cofactor.

The protein resides in the cytoplasm. It carries out the reaction isopentenyl diphosphate = dimethylallyl diphosphate. It participates in isoprenoid biosynthesis; dimethylallyl diphosphate biosynthesis; dimethylallyl diphosphate from isopentenyl diphosphate: step 1/1. Catalyzes the 1,3-allylic rearrangement of the homoallylic substrate isopentenyl (IPP) to its highly electrophilic allylic isomer, dimethylallyl diphosphate (DMAPP). This is Isopentenyl-diphosphate Delta-isomerase from Shigella boydii serotype 4 (strain Sb227).